A 116-amino-acid polypeptide reads, in one-letter code: Large ribosomal subunit protein bL20 (116 aa).

Belongs to the bacterial ribosomal protein bL20 family.

Its function is as follows. Binds directly to 23S ribosomal RNA and is necessary for the in vitro assembly process of the 50S ribosomal subunit. It is not involved in the protein synthesizing functions of that subunit. In Desulforapulum autotrophicum (strain ATCC 43914 / DSM 3382 / VKM B-1955 / HRM2) (Desulfobacterium autotrophicum), this protein is Large ribosomal subunit protein bL20.